The following is a 340-amino-acid chain: Protein SSUH2 homolog (340 aa).

Positions Met-1–Met-11 are enriched in acidic residues. Positions Met-1–Ser-20 are disordered.

Widely expressed, with highest levels in the liver, intestine, tongue and underjaw.

The protein resides in the cytoplasm. Its subcellular location is the nucleus. Plays a role in odontogenesis. This Mus musculus (Mouse) protein is Protein SSUH2 homolog.